The primary structure comprises 297 residues: PAK4-inhibitor INKA2 (297 aa).

Disordered stretches follow at residues 82–109, 175–200, and 234–285; these read GRGP…PSHR, LEKG…PQEL, and TPMV…LEHS. Residues 92–102 are compositionally biased toward low complexity; it reads SPSSQPSLGSS. The inka box stretch occupies residues 137–180; that stretch reads EPDDWTSTLMSRGRNRQPLVLGDNVFADLVGNWLDLPELEKGGE. Positions 244–253 are enriched in basic residues; sequence RSQKVKKRSL.

This sequence belongs to the INKA family. In terms of assembly, interacts with PAK4.

Its subcellular location is the nucleus. Its function is as follows. Inhibitor of the serine/threonine-protein kinase PAK4. Acts by binding PAK4 in a substrate-like manner, inhibiting the protein kinase activity. The protein is PAK4-inhibitor INKA2 of Homo sapiens (Human).